A 181-amino-acid chain; its full sequence is Neuroblastoma suppressor of tumorigenicity 1 (181 aa).

A signal peptide spans 1-16 (MMLRVLVGAVLPAMLL). Intrachain disulfides connect Cys35–Cys85, Cys49–Cys99, Cys59–Cys118, Cys63–Cys120, and Cys82–Cys123. The 90-residue stretch at 35-124 (CEAKNITQIV…ILHCSCQACG (90 aa)) folds into the CTCK domain. Residues 132 to 181 (LSVYVQGEDGPGSQPGTHPHPHPHPHPGGQTPEPEDPPGAPHTEEEGAED) are disordered.

It belongs to the DAN family. In terms of assembly, homodimer. In terms of tissue distribution, most abundant in normal lung and meningioma.

It is found in the secreted. In terms of biological role, possible candidate as a tumor suppressor gene of neuroblastoma. May play an important role in preventing cells from entering the final stage (G1/S) of the transformation process. In Homo sapiens (Human), this protein is Neuroblastoma suppressor of tumorigenicity 1 (NBL1).